A 220-amino-acid polypeptide reads, in one-letter code: UPF0502 protein CV_4303 (220 aa).

The protein belongs to the UPF0502 family.

This Chromobacterium violaceum (strain ATCC 12472 / DSM 30191 / JCM 1249 / CCUG 213 / NBRC 12614 / NCIMB 9131 / NCTC 9757 / MK) protein is UPF0502 protein CV_4303.